Reading from the N-terminus, the 88-residue chain is Synaptonemal complex central element protein 3 (88 aa).

The stretch at 8-75 (ERSYDNMLKM…FLNCKEEMEK (68 aa)) forms a coiled coil.

In terms of assembly, homodimer. Can form higher-order homooligomers. Interacts with SYCP1 (via tetrameric core); the interaction remodels SYCP1 homotetramers to 2:1 heterotrimers with SYCE3. SYCP1/SYCE3 heterotrimers form lattice assemblies as part of the mature synaptonemal complex via both lateral and head-to-head interactions. Interacts with the SYCE1-SIX6OS1 complex; the interaction recruits the SYCE1-SIX6OS1 complex to the central element of the synaptonemal complex. Interacts with the SYCE2-TEX12 complex; the interaction promotes fibrous assembly of SYCE2-TEX12 as part of the synaptonemal complex central element. Interacts with SYCE1. Interacts with SYCE2. Interacts with proteasome subunit PSMA8; to participate in meiosis progression during spermatogenesis. Interacts with SPO16. In terms of tissue distribution, expression is restricted to spermatocytes and is absent in spermatogonia, spermatids and spermatogonia (at protein level). Expressed in adult testis and embryonic ovary. Expressed in the convoluted seminiferous tubules in spermatogonia and spermatocytes.

Its subcellular location is the nucleus. It localises to the chromosome. Major component of the transverse central element of synaptonemal complexes (SCS), formed between homologous chromosomes during meiotic prophase. Required for the assembly of the central element of the synaptonemal complex during meiosis, via remodeling of SYCP1 lattice structures and promoting recruitment of SYCE2-TEX12 and SYCE1-SIX60S1 complexes. Required for chromosome loading of the central element-specific SCS proteins, and for initiating synapsis between homologous chromosomes. Chromosome loading appears to require SYCP1. Required for fertility and normal testis development. May play a role in apoptosis of spermatogenic cells and pathogenesis of cryptorchidism. The protein is Synaptonemal complex central element protein 3 of Mus musculus (Mouse).